The sequence spans 106 residues: A-type ATP synthase subunit F (106 aa).

It belongs to the V-ATPase F subunit family. Has multiple subunits with at least A(3), B(3), C, D, E, F, H, I and proteolipid K(x).

Its subcellular location is the cell membrane. Component of the A-type ATP synthase that produces ATP from ADP in the presence of a proton gradient across the membrane. This is A-type ATP synthase subunit F from Methanosphaera stadtmanae (strain ATCC 43021 / DSM 3091 / JCM 11832 / MCB-3).